The chain runs to 643 residues: Extracellular metalloproteinase 4 (643 aa).

The signal sequence occupies residues 1–18 (MHGLLLAGLLALPLNVLA). Residues 19–254 (HPTESHSSGI…VHSVVDYVSA (236 aa)) constitute a propeptide that is removed on maturation. A compositionally biased stretch (basic and acidic residues) spans 47–57 (TKSDAVPKQDD). The tract at residues 47–71 (TKSDAVPKQDDESFTTSSTGDDNVS) is disordered. The span at 60-71 (FTTSSTGDDNVS) shows a compositional bias: polar residues. N271 and N420 each carry an N-linked (GlcNAc...) asparagine glycan. Position 437 (H437) interacts with Zn(2+). E438 is a catalytic residue. Residue H441 coordinates Zn(2+). N-linked (GlcNAc...) asparagine glycosylation occurs at N510.

Belongs to the peptidase M36 family. It depends on Zn(2+) as a cofactor.

It is found in the secreted. Its function is as follows. Secreted metalloproteinase probably acting as a virulence factor. This Trichophyton equinum (Horse ringworm fungus) protein is Extracellular metalloproteinase 4 (MEP4).